Consider the following 268-residue polypeptide: MDRNNVLVLGPPKSGKIRFAQFISGDYETETISDDSHSGLMYKCNLKTKYFSVDVNLLIEEFPESRKEPEEKWISSLQTWFGEFESDTMADLREVIEGVVFTVCVNEWDDNVIKQQLDILSNMKDLLKDNDPFFIVMGVSEHDIEQDTMADLEDLVLLNGFEFVYFNDSGMNEFRDKMGKDRLLEVLETHEWTQKHLTHVSNEDYMAYKKEKMTSMTQGLLQEDDCNIPTLDVLLQKLQIEKSKVEEMKENERKGYVDGLVDEFLEYF.

The protein belongs to the IRC6 family.

Its function is as follows. Involved in gross chromosomal rearrangements (GCRs) and telomere healing. The polypeptide is Increased recombination centers protein 6 (IRC6) (Clavispora lusitaniae (strain ATCC 42720) (Yeast)).